Reading from the N-terminus, the 324-residue chain is Signal peptidase I (324 aa).

The residue at position 1 (Met1) is a Blocked amino end (Met). Residues 1 to 3 (MAN) are Periplasmic-facing. Residues 4–22 (MFALILVIATLVTGILWCV) form a helical membrane-spanning segment. The Cytoplasmic portion of the chain corresponds to 23 to 58 (DKFFFAPKRRERQAAAQAAAGDSLDKATLKKVAPKP). Residues 59-77 (GWLETGASVFPVLAIVLIV) form a helical membrane-spanning segment. Over 78-324 (RSFIYEPFQI…LRLSRIGGIH (247 aa)) the chain is Periplasmic. Residues Ser91 and Lys146 contribute to the active site. A disulfide bridge connects residues Cys171 and Cys177.

It belongs to the peptidase S26 family.

It localises to the cell inner membrane. The enzyme catalyses Cleavage of hydrophobic, N-terminal signal or leader sequences from secreted and periplasmic proteins.. The chain is Signal peptidase I (lepB) from Escherichia coli (strain K12).